A 179-amino-acid chain; its full sequence is Large ribosomal subunit protein uL5 (179 aa).

This sequence belongs to the universal ribosomal protein uL5 family. As to quaternary structure, part of the 50S ribosomal subunit; part of the 5S rRNA/L5/L18/L25 subcomplex. Contacts the 5S rRNA and the P site tRNA. Forms a bridge to the 30S subunit in the 70S ribosome.

Its function is as follows. This is one of the proteins that bind and probably mediate the attachment of the 5S RNA into the large ribosomal subunit, where it forms part of the central protuberance. In the 70S ribosome it contacts protein S13 of the 30S subunit (bridge B1b), connecting the 2 subunits; this bridge is implicated in subunit movement. Contacts the P site tRNA; the 5S rRNA and some of its associated proteins might help stabilize positioning of ribosome-bound tRNAs. The chain is Large ribosomal subunit protein uL5 from Shouchella clausii (strain KSM-K16) (Alkalihalobacillus clausii).